The primary structure comprises 219 residues: Charged multivesicular body protein 5 (219 aa).

A compositionally biased stretch (basic residues) spans 1 to 10 (MNRLFGKAKP). A disordered region spans residues 1–21 (MNRLFGKAKPKAPPPSLTDCI). The (Microbial infection) N6-stearoyl lysine moiety is linked to residue Lys-7. The stretch at 26–179 (SRAESIDKKI…LGDELLADED (154 aa)) forms a coiled coil. Phosphoserine is present on Ser-86. The interaction with VTA1 stretch occupies residues 121–158 (KQVKIDQIEDLQDQLEDMMEDANEIQEALSRSYGTPEL). Residues 188–219 (SAPAIPEGVPTDTKNKDGVLVDEFGLPQIPAS) are disordered.

Belongs to the SNF7 family. In terms of assembly, probable peripherally associated component of the endosomal sorting required for transport complex III (ESCRT-III). ESCRT-III components are thought to multimerize to form a flat lattice on the perimeter membrane of the endosome. Several assembly forms of ESCRT-III may exist that interact and act sequentially. Interacts with VTA1; the interaction involves soluble CHMP5. Interacts with CHMP2A. Interacts with NOD2. Interacts with BROX. In terms of processing, (Microbial infection) Stearoylated By S.flexneri N-epsilon-fatty acyltransferase IcsB, promoting S.flexneri evasion of autophagy. ISGylated. Isgylation inhibits its interaction with VTA1.

It is found in the cytoplasm. Its subcellular location is the cytosol. It localises to the endosome membrane. The protein localises to the midbody. Probable peripherally associated component of the endosomal sorting required for transport complex III (ESCRT-III) which is involved in multivesicular bodies (MVBs) formation and sorting of endosomal cargo proteins into MVBs. MVBs contain intraluminal vesicles (ILVs) that are generated by invagination and scission from the limiting membrane of the endosome and mostly are delivered to lysosomes enabling degradation of membrane proteins, such as stimulated growth factor receptors, lysosomal enzymes and lipids. The MVB pathway appears to require the sequential function of ESCRT-O, -I,-II and -III complexes. ESCRT-III proteins mostly dissociate from the invaginating membrane before the ILV is released. The ESCRT machinery also functions in topologically equivalent membrane fission events, such as the terminal stages of cytokinesis and the budding of enveloped viruses (HIV-1 and other lentiviruses). ESCRT-III proteins are believed to mediate the necessary vesicle extrusion and/or membrane fission activities, possibly in conjunction with the AAA ATPase VPS4. Involved in HIV-1 p6- and p9-dependent virus release. The polypeptide is Charged multivesicular body protein 5 (CHMP5) (Homo sapiens (Human)).